An 840-amino-acid polypeptide reads, in one-letter code: Intracellular phospholipase A1 (840 aa).

Disordered regions lie at residues 1 to 142 (MSGS…RRRK) and 666 to 718 (KKNK…AANA). Over residues 26 to 39 (GKVKQKEKPKEKQM) the composition is skewed to basic and acidic residues. Residues 97 to 111 (SRPSGLPSNGNPGSS) show a composition bias toward low complexity. A DDHD domain is found at 564 to 827 (LEFKVKYLFA…ALFLANVLYC (264 aa)). The span at 668-680 (NKDDKTADARSGG) shows a compositional bias: basic and acidic residues. A compositionally biased stretch (acidic residues) spans 681-694 (DDENEDEDECDSDE).

This sequence belongs to the PA-PLA1 family.

It catalyses the reaction 1,2-dihexadecanoyl-sn-glycero-3-phospho-(1D-myo-inositol) + H2O = 2-hexadecanoyl-sn-glycero-3-phospho-(1D-myo-inositol) + hexadecanoate + H(+). The enzyme catalyses a 1,2-diacyl-sn-glycero-3-phospho-L-serine + H2O = a 2-acyl-sn-glycero-3-phospho-L-serine + a fatty acid + H(+). It carries out the reaction 1-hexadecanoyl-2-(9Z-octadecenoyl)-sn-glycero-3-phospho-L-serine + H2O = 2-(9Z-octadecenoyl)-sn-glycero-3-phospho-L-serine + hexadecanoate + H(+). The catalysed reaction is 1,2-di-(9Z-octadecenoyl)-sn-glycero-3-phosphocholine + H2O = (9Z-octadecenoyl)-sn-glycero-3-phosphocholine + (9Z)-octadecenoate + H(+). It catalyses the reaction a 1,2-diacyl-sn-glycero-3-phosphocholine + H2O = a 1-acyl-sn-glycero-3-phosphocholine + a fatty acid + H(+). The enzyme catalyses 1,2-dihexadecanoyl-sn-glycero-3-phosphocholine + H2O = 1-hexadecanoyl-sn-glycero-3-phosphocholine + hexadecanoate + H(+). Inhibited by E-6-bromomethylene-3-1-naphthalenyl-2H-tetrahydropyran-2-one (BEL) in vitro. In terms of biological role, hydrolyzes the ester bond at the sn-1 position of glycerophospholipids and produces 2-acyl lysophospholipids, being phosphatidylinositol (PI) its major substrate. PI is a versatile lipid that not only serves as a structural component of cellular membranes, but also plays important roles in signal transduction through distinct phosphorylated derivatives of the inositol head group. Catalyzes the hydrolysis of phosphatidylcholine at sn-2 position in vitro. Regulates asymmetric division, an important property of stem cells in C.elegans, by controlling the subcellular localizations of beta-catenin. The polypeptide is Intracellular phospholipase A1 (Caenorhabditis elegans).